Here is a 667-residue protein sequence, read N- to C-terminus: Cyclin-dependent kinase 17 (667 aa).

2 disordered regions span residues 1 to 70 and 85 to 184; these read MTAY…SSLN and DSEY…LRKM. Acidic residues-rich tracts occupy residues 99–111 and 119–144; these read EDFD…EFED and DEDD…ITPE. The span at 151–164 shows a compositional bias: polar residues; that stretch reads TGVTTQTTPPSNNT. The Protein kinase domain occupies 328-609; the sequence is YEKLDKLGEG…AAEAVKHPFL (282 aa). ATP contacts are provided by residues 334-342 and lysine 357; that span reads LGEGTYATV. Aspartate 449 acts as the Proton acceptor in catalysis. Mg(2+) contacts are provided by asparagine 454 and aspartate 467. Residues 642 to 667 are disordered; that stretch reads HHHSSRRHHRGTLVKDKYRMHSSHHT. Over residues 644-653 the composition is skewed to basic residues; sequence HSSRRHHRGT.

The protein belongs to the protein kinase superfamily. CMGC Ser/Thr protein kinase family. CDC2/CDKX subfamily. As to quaternary structure, interacts with cyy-1; the interaction is required to activate pct-1. Requires Mg(2+) as cofactor.

It localises to the cytoplasm. The protein localises to the cell projection. It is found in the dendrite. Its subcellular location is the axon. It carries out the reaction L-seryl-[protein] + ATP = O-phospho-L-seryl-[protein] + ADP + H(+). The enzyme catalyses L-threonyl-[protein] + ATP = O-phospho-L-threonyl-[protein] + ADP + H(+). Functionally, serine/threonine-protein kinase, which, in association with cyy-1, regulates the trafficking of synaptic vesicles in the DA9 motor neuron and probably also in the DD motor neurons and in RIA interneurons. Sufficient for synaptic vesicle trafficking in the DA9 motor neuron. The polypeptide is Cyclin-dependent kinase 17 (Caenorhabditis elegans).